The chain runs to 181 residues: Oligoribonuclease (181 aa).

The Exonuclease domain maps to 8-171; that stretch reads LIWIDLEMTG…DDIRESIAEL (164 aa). Tyr129 is an active-site residue.

The protein belongs to the oligoribonuclease family.

The protein localises to the cytoplasm. Its function is as follows. 3'-to-5' exoribonuclease specific for small oligoribonucleotides. This Alcanivorax borkumensis (strain ATCC 700651 / DSM 11573 / NCIMB 13689 / SK2) protein is Oligoribonuclease.